A 1030-amino-acid polypeptide reads, in one-letter code: Tricorn protease (1030 aa).

A six-bladed beta propeller region spans residues 1–270 (MANLLQNPDI…DNVKSLDIGP (270 aa)). A binds the substrate's C-terminus region spans residues 93 to 94 (RR). A seven-bladed beta propeller region spans residues 286-635 (LEDFSMSPGD…EEEKSLNIDA (350 aa)). A C-1 region spans residues 641–712 (NVKEDFAEMY…RTSHSYEMGG (72 aa)). Histidine 706 (charge relay system) is an active-site residue. The tract at residues 721 to 816 (RAGRIACDFK…SGFVDVLQDD (96 aa)) is PDZ-like. The C-2 stretch occupies residues 817–1022 (RYIRYRAWVE…IEMVLADLEK (206 aa)). Position 877–879 (877–879 (GGG)) interacts with substrate. Serine 926 serves as the catalytic Nucleophile. 954–956 (GIS) lines the substrate pocket. Glutamate 984 (charge relay system) is an active-site residue.

It belongs to the peptidase S41B family. As to quaternary structure, part of the tricorn proteolytic complex.

The protein localises to the cytoplasm. Tricorn degrades oligopeptides in a sequential manner. This Thermoplasma volcanium (strain ATCC 51530 / DSM 4299 / JCM 9571 / NBRC 15438 / GSS1) protein is Tricorn protease (tri).